Consider the following 595-residue polypeptide: (E)-beta-ocimene synthase, chloroplastic (595 aa).

Residues Met-1–Ser-32 constitute a chloroplast transit peptide. Mn(2+) contacts are provided by Asp-350 and Asp-354. The DDXXD motif motif lies at Asp-350 to Asp-354. 2 homodimerization regions span residues Tyr-356–Leu-362 and Glu-428–Pro-465. Residues Asn-493 and Glu-501 each contribute to the Mn(2+) site.

This sequence belongs to the terpene synthase family. Homodimer. Mn(2+) is required as a cofactor. It depends on Mg(2+) as a cofactor. As to expression, expressed in peltate glandular trichomes. Present in flowers, leaves and stems.

It localises to the plastid. The protein resides in the chloroplast. It catalyses the reaction (2E)-geranyl diphosphate = (E)-beta-ocimene + diphosphate. It functions in the pathway secondary metabolite biosynthesis; terpenoid biosynthesis. Involved in the biosynthesis of monoterpenes natural products. Monoterpene synthase that catalyzes mainly the formation of (E)-beta-ocimene and minor amounts of other monoterpenes (e.g. myrcene, (Z)-beta-ocimene, alpha- and gamma-terpinene) from geranyl diphosphate (GPP). The protein is (E)-beta-ocimene synthase, chloroplastic of Origanum vulgare (Wild marjoram).